A 96-amino-acid polypeptide reads, in one-letter code: Conantokin Rl-B (96 aa).

The first 21 residues, 1–21 (MQLYTYLYLLVPLVTFHLILG), serve as a signal peptide directing secretion. Positions 22–78 (TGTLDHGDALTERRSTDATALKPEPVLLQKSSARSTNDNGKDTQMKRILKKRGNKAR) are excised as a propeptide. Residues 51-96 (KSSARSTNDNGKDTQMKRILKKRGNKARGEEELAEKAPEFARELAN) form a disordered region. Over residues 77-96 (ARGEEELAEKAPEFARELAN) the composition is skewed to basic and acidic residues. Glu-81 serves as a coordination point for a divalent metal cation. Residues Glu-81, Glu-82, and Glu-85 each carry the 4-carboxyglutamate modification. Residue Glu-85 participates in a divalent metal cation binding. Pro-88 is subject to 4-hydroxyproline. The a divalent metal cation site is built by Glu-89 and Glu-93. Glu-89 and Glu-93 each carry 4-carboxyglutamate. An Asparagine amide modification is found at Asn-96.

Belongs to the conotoxin B superfamily. The cofactor is Ca(2+). Mg(2+) is required as a cofactor. Post-translationally, hydroxylation of Pro-88 is important for NR2B/GRIN2B NMDA receptor selectivity. Removal of hydroxylation does not change global NMDA receptor antagonism (tested on WT neurons), but it decreases the inhibitory potency on NR2B/GRIN2B NMDA receptors and increases the inhibitory potency on NR2A/GRIN2A NMDA receptors. Hydroxylation of Pro-88 locally disrupts a small region of the divalent cation-induced alpha-helix but does not destabilize the entire helix. In terms of tissue distribution, expressed by the venom duct.

The protein resides in the secreted. Conantokins inhibit N-methyl-D-aspartate (NMDA) receptors. This toxin has antagonist activity on the NR2B/GRIN2B subunit (IC(50)=0.1 uM). In vivo, when delivered into the brain, is active has anticonvulsant activity in the model of epilepsy in mice. The protein is Conantokin Rl-B of Conus rolani (Cone snail).